Consider the following 596-residue polypeptide: Bromodomain-containing protein 9 (596 aa).

The span at 1-10 (MGKKHKKHKA) shows a compositional bias: basic residues. Disordered regions lie at residues 1 to 26 (MGKK…PLEK) and 38 to 137 (EVTE…AENE). Residues 50–62 (SYYDDRSDHERER) show a composition bias toward basic and acidic residues. At serine 56 the chain carries Phosphoserine. Residues 63–73 (HREKKKKKKKK) are compositionally biased toward basic residues. The segment covering 74 to 85 (SEKEKHLDEEER) has biased composition (basic and acidic residues). Residues 86 to 97 (RKRKEEKKRKRE) are compositionally biased toward basic residues. Positions 111–126 (DPGKKVEVEPPPDRPV) are enriched in basic and acidic residues. Residues 136–240 (NESTPIQRLL…HAGFKMMSKA (105 aa)) enclose the Bromo domain. A histone H4K5ac H4K8ac and histone H4K5bu H4K8bu binding region spans residues 214-216 (TYN). Residue lysine 372 is modified to N6-acetyllysine; alternate. Residue lysine 372 forms a Glycyl lysine isopeptide (Lys-Gly) (interchain with G-Cter in SUMO2); alternate linkage. The disordered stretch occupies residues 536 to 596 (AQAERGGSRP…SPEPAAPAKN (61 aa)). The span at 543–555 (SRPSSNLSSLSTA) shows a compositional bias: low complexity. 2 positions are modified to phosphoserine: serine 565 and serine 587.

As to quaternary structure, binds acetylated histones H3 and H4. Binds butyrylated histone H4. Component of the multiprotein chromatin-remodeling subcomplex SWI/SNF called GBAF, which includes at least BICRA or BICRAL (mutually exclusive), BRD9, SS18, the core BAF subunits, SMARCA2/BRM, SMARCA4/BRG1/BAF190A, ACTL6A/BAF53, SMARCC1/BAF155, and SMARCD1/BAF60A. Interacts (via N-terminal bromodomain) with acetylated RAD54. Interacts (via C-terminus) with RAD51.

It is found in the nucleus. Plays a role in chromatin remodeling and regulation of transcription. Acts as a chromatin reader that recognizes and binds acylated histones: binds histones that are acetylated and/or butyrylated. Component of SWI/SNF chromatin remodeling subcomplex GBAF that carries out key enzymatic activities, changing chromatin structure by altering DNA-histone contacts within a nucleosome in an ATP-dependent manner. Also orchestrates the RAD51-RAD54 complex formation and thereby plays a role in homologous recombination (HR). This is Bromodomain-containing protein 9 (Brd9) from Mus musculus (Mouse).